The sequence spans 1256 residues: MSVSDIETERTRYYDAYDADDAELDGFIVSDEENDNLENENRNERDPDSRNQDDVDEYGQPQIDRIRTMTEALAPNESQASKVLRAHISVLVSALGGPDHTSNISPPPYKLGHDALACLKDIKRWIKSVDDRQDSYQVALACAESGLVINDLIVILCQWDSKNKKKEDFRNKRTMEKIMLACLELLVLLTWSVELRPESSDKQKLLYYDVKKAQIKYKRAILTYNKGQTLKAVIRLVLPIISKERVDREPKDNAIMRLVLFFFRNILYVEPPSPSISKKSSKTIVVTDNMPEGVSYDDISLSATISAFSKNRVLMLFLTLSSGIGVDFDSRFLGPTLLECIHLLVRGVDPNDILKLKQMRIPTEINDPGNSSSPFHNVPPASSTTGLQLQDLLAKESKIKNSQTQSMSTRHGRFGSLLSIRGDHSMSFVVSGQEALINAGQTMQKLDRSKKWKNRSYFKYDSDEYTKSSNTTYMNYGGLVILHEFIESFLAGGCFNILIEKLSSVFSSSDSILEKEYETATFFLTIAWFFQYKREKTVLYSSGTTNLQPIGEEDDRNDFGSVGAALSQVNFILLVKYCVDSFSISPKRWSSLHVVLICLKELLEISNTLFTRSSSSAGDEEQNELDRELAEGIISHLLVTQDFLSILYHLPQTASRHSPEYLKVCISVVHILLKTLKNFAEEDVKLFIQTTRRNSKKKANKESNDQSDAVEQVDESDTEDKRTHARVTRERKINYERTEVKFFHQDTVSTYIEYLSRYEDLTHYEIKKCLTYFHRLFVVRKDFNGLYRLDFMQVLHKLRDYLPSQSNIRGQVDEFIYYFMKKFKASIERFPNPIEILFPRFEDAESKTYLATGELYIQTEREIRSANVKRFEPGKPLEFVRHFEDNEKYKILVSALYEQGLSNMLVCLVEDLQRIHGIKQLDEDVDEVLQLKEDFRQYVLTNSHLRLLLRTVGLIPGYSLSQECQVPSKLTSSDIDSAITLIKKWMGLQPATFEDGKDPSYFLRSTGDTVDRPIDYSDSEDDIAFEITPKDRPNESHYDMLTELDELERAISGAENREKGKARKRGNKSSSTIKKKSLQSRSRRPPRFNVDSDDESELRKEVKSSEFVHDSDDESDDEAFFEREERLRQMLNSSGGIVNAQQLSEFKKVWASLESTGGIATASQVVRAVESVANISDGVDTHSHQDDKSQPSDSENEDSSEEVSEVQIRKRLRIEDDENDSDNNVSENYVSAEEGEEATPTVKRKKRLVISDDEDE.

Over residues 26–38 (GFIVSDEENDNLE) the composition is skewed to acidic residues. 4 disordered regions span residues 26 to 58 (GFIVSDEENDNLENENRNERDPDSRNQDDVDEY), 695 to 725 (SKKKANKESNDQSDAVEQVDESDTEDKRTHA), 1052 to 1121 (SGAE…EAFF), and 1176 to 1256 (SDGV…DEDE). Basic and acidic residues predominate over residues 39–53 (NENRNERDPDSRNQD). The segment covering 1060–1086 (GKARKRGNKSSSTIKKKSLQSRSRRPP) has biased composition (basic residues). Basic and acidic residues-rich tracts occupy residues 1097–1110 (ELRKEVKSSEFVHD) and 1179–1190 (VDTHSHQDDKSQ). Residues 1194–1204 (SENEDSSEEVS) are compositionally biased toward acidic residues. Positions 1222–1231 (DNNVSENYVS) are enriched in low complexity.

The protein belongs to the timeless family. As to quaternary structure, component of the fork protection complex (FPC) consisting of TOF1 and CSM3.

It localises to the nucleus. Forms a fork protection complex (FPC) with CSM3 and which is required for chromosome segregation during meiosis and DNA damage repair. FPC coordinates leading and lagging strand synthesis and moves with the replication fork. FPC stabilizes replication forks in a configuration that is recognized by replication checkpoint sensors. This Scheffersomyces stipitis (strain ATCC 58785 / CBS 6054 / NBRC 10063 / NRRL Y-11545) (Yeast) protein is Topoisomerase 1-associated factor 1 (TOF1).